The chain runs to 71 residues: Alpha-elapitoxin-Nn3a (71 aa).

Intrachain disulfides connect Cys3–Cys20, Cys14–Cys42, Cys26–Cys30, Cys46–Cys56, and Cys57–Cys62.

Belongs to the three-finger toxin family. Long-chain subfamily. Type II alpha-neurotoxin sub-subfamily. In terms of tissue distribution, expressed by the venom gland.

The protein localises to the secreted. Its function is as follows. Nicotinic acetylcholine receptor antagonist. Binds to muscle nicotinic acetylcholine receptor (nAChR) and inhibits acetylcholine from binding to the receptor, thereby impairing neuromuscular transmission. Produces peripheral paralysis by blocking neuromuscular transmission at the postsynaptic site. Induces concentration-dependent inhibition of indirect twitches and abolishes contractile responses of tissues to exogenous acetylcholine and carbachol, in the chick biventer cervicis nerve-muscle preparation at 100-300 nM (in vitro). Prior incubation of tissues with Indian polyvalent antivenom (1 ml/0.6 mg) prevents the neurotoxic effects at 100 nM (in vitro). Addition of Indian polyvalent antivenom (1 ml/0.6 mg) at the t90 time point partially restores the neurotoxic effects (in vitro). Displays a reversible antagonism of concentration-response curves to carbachol, with a pA2 of 8.17 (in vitro). The protein is Alpha-elapitoxin-Nn3a of Naja naja (Indian cobra).